The following is a 69-amino-acid chain: DNA-directed RNA polymerase subunit omega (69 aa).

Belongs to the RNA polymerase subunit omega family. The RNAP catalytic core consists of 2 alpha, 1 beta, 1 beta' and 1 omega subunit. When a sigma factor is associated with the core the holoenzyme is formed, which can initiate transcription.

It catalyses the reaction RNA(n) + a ribonucleoside 5'-triphosphate = RNA(n+1) + diphosphate. Its function is as follows. Promotes RNA polymerase assembly. Latches the N- and C-terminal regions of the beta' subunit thereby facilitating its interaction with the beta and alpha subunits. The chain is DNA-directed RNA polymerase subunit omega from Geotalea uraniireducens (strain Rf4) (Geobacter uraniireducens).